The following is a 180-amino-acid chain: dCTP deaminase (180 aa).

DCTP contacts are provided by residues 101 to 106 (KSSFAR) and Asp-117. The Proton donor/acceptor role is filled by Glu-127. Tyr-159 and Gln-168 together coordinate dCTP.

It belongs to the dCTP deaminase family. In terms of assembly, homotrimer.

The enzyme catalyses dCTP + H2O + H(+) = dUTP + NH4(+). The protein operates within pyrimidine metabolism; dUMP biosynthesis; dUMP from dCTP (dUTP route): step 1/2. Catalyzes the deamination of dCTP to dUTP. The polypeptide is dCTP deaminase (Ignicoccus hospitalis (strain KIN4/I / DSM 18386 / JCM 14125)).